The sequence spans 361 residues: Histidinol-phosphate aminotransferase (361 aa).

Position 221 is an N6-(pyridoxal phosphate)lysine (Lys221).

This sequence belongs to the class-II pyridoxal-phosphate-dependent aminotransferase family. Histidinol-phosphate aminotransferase subfamily. In terms of assembly, homodimer. Pyridoxal 5'-phosphate serves as cofactor.

The catalysed reaction is L-histidinol phosphate + 2-oxoglutarate = 3-(imidazol-4-yl)-2-oxopropyl phosphate + L-glutamate. It participates in amino-acid biosynthesis; L-histidine biosynthesis; L-histidine from 5-phospho-alpha-D-ribose 1-diphosphate: step 7/9. This is Histidinol-phosphate aminotransferase from Symbiobacterium thermophilum (strain DSM 24528 / JCM 14929 / IAM 14863 / T).